Reading from the N-terminus, the 59-residue chain is U-myrmeciitoxin(01)-Mg5a (59 aa).

A signal peptide spans 1-21 (MRLSYLSLALAIIFVLTIMHA). Positions 22 to 38 (SNVEAKASADPEPDAVG) are excised as a propeptide.

Expressed by the venom gland.

It is found in the secreted. Functionally, may have antimicrobial properties, like most ant linear peptides. The polypeptide is U-myrmeciitoxin(01)-Mg5a (Myrmecia gulosa (Red bulldog ant)).